A 223-amino-acid polypeptide reads, in one-letter code: Chalcone--flavanone isomerase (223 aa).

Residues threonine 50, asparagine 114, and threonine 191 each coordinate substrate.

This sequence belongs to the chalcone isomerase family.

The enzyme catalyses a chalcone = a flavanone.. Its pathway is secondary metabolite biosynthesis; flavonoid biosynthesis. Functionally, catalyzes the intramolecular cyclization of bicyclic chalcones into tricyclic (S)-flavanones. Responsible for the isomerization of 4,2',4',6'-tetrahydroxychalcone (also termed chalcone) into naringenin. This Pisum sativum (Garden pea) protein is Chalcone--flavanone isomerase (CHI).